The following is a 470-amino-acid chain: MIKIYNTMSRTKETFKPLVDHKVSMYVCGPTVYNYIHIGNARSIIAFDTIRRYFEYRGFEVKFVSNFTDVDDKMINSAREQGITVPELADRYIGAFKEDVQAVNVEPATLNPRATENIDDIIAFIADLMDKGFAYAVDGDVYYRARKFSKYGALSHQNIDELEQGASQHVDDEETARKEDPIDFALWKAAKGDEIAWKAPWGTGRPGWHIECSVMSTKYLGDTFDIHGGGEDLQFPHHENEIAQSEAKTGKQFARYWMHNGFVTVGDDNEKMSKSLGNFVTVHDLVQKINPQVLRFLMSTTQYRRPIQYTQASLQDAKNNLEKLQNAFINLNYRLQGAQGAADATVAEQAAQLETDFITAMDDDFNAQNGITVVYEFARLINVYSEKTAVNAEQINQLLTSYAKMAAVFGIELKQIENDDAEIDELVKQRDQARADRDFETSDRLRNQLKEMGVILEDTPQGTRWRKKDE.

Residue cysteine 28 coordinates Zn(2+). The 'HIGH' region signature appears at 30-40 (PTVYNYIHIGN). Zn(2+) is bound by residues cysteine 212, histidine 237, and glutamate 241. A 'KMSKS' region motif is present at residues 271–275 (KMSKS). Position 274 (lysine 274) interacts with ATP.

It belongs to the class-I aminoacyl-tRNA synthetase family. Monomer. The cofactor is Zn(2+).

It localises to the cytoplasm. The enzyme catalyses tRNA(Cys) + L-cysteine + ATP = L-cysteinyl-tRNA(Cys) + AMP + diphosphate. The sequence is that of Cysteine--tRNA ligase from Pediococcus pentosaceus (strain ATCC 25745 / CCUG 21536 / LMG 10740 / 183-1w).